The primary structure comprises 314 residues: Homeobox-leucine zipper protein HAT7 (314 aa).

The disordered stretch occupies residues 77–109; that stretch reads HHHLTQKSPTTTNNMNDQDQVGEEDNLSDDGSH. Polar residues predominate over residues 82 to 95; the sequence is QKSPTTTNNMNDQD. The segment at residues 112–171 is a DNA-binding region (homeobox); it reads LGEKKKRLNLEQVRALEKSFELGNKLEPERKMQLAKALGLQPRQIAIWFQNRRARWKTKQ. The segment at 172 to 207 is leucine-zipper; that stretch reads LERDYDSLKKQFDVLKSDNDSLLAHNKKLHAELVAL.

This sequence belongs to the HD-ZIP homeobox family. Class I subfamily. In terms of tissue distribution, expressed predominantly in flowers, and in the cortex of the root and the stem.

It is found in the nucleus. Probable transcription factor. The sequence is that of Homeobox-leucine zipper protein HAT7 (HAT7) from Arabidopsis thaliana (Mouse-ear cress).